A 197-amino-acid polypeptide reads, in one-letter code: Protein LURP-one-related 9 (197 aa).

The protein belongs to the LOR family.

In terms of biological role, might be related to the phospholipid scramblase and tubby-like superfamily of membrane tethered transcription factors. This chain is Protein LURP-one-related 9, found in Arabidopsis thaliana (Mouse-ear cress).